The sequence spans 660 residues: Interferon-induced GTP-binding protein Mx1 (660 aa).

Met1 carries the N-acetylmethionine modification. Basic and acidic residues predominate over residues 1 to 10 (MVHSEAKMTR). The tract at residues 1–29 (MVHSEAKMTRPDSASASKQQLLNGNADIQ) is disordered. The segment covering 12–29 (DSASASKQQLLNGNADIQ) has biased composition (polar residues). One can recognise a Dynamin-type G domain in the interval 67 to 340 (DLALPAIAVI…LITHISKSLP (274 aa)). The segment at 77 to 84 (GDQSSGKS) is G1 motif. 77–84 (GDQSSGKS) contacts GTP. The tract at residues 102–104 (VTR) is G2 motif. The tract at residues 178–181 (DLPG) is G3 motif. GTP contacts are provided by residues 178–182 (DLPGI) and 247–250 (TKPD). The tract at residues 247 to 250 (TKPD) is G4 motif. Residues 279–282 (KCRG) form a G5 motif region. The segment at 341 to 366 (LLENQIKESYQNLSDELQKYGTDIPE) is bundle signaling element (BSE). Residues 366–533 (EDETEKTFFL…HFQMEKIVYC (168 aa)) are middle domain. Residues 367–630 (DETEKTFFLI…RDTYDWLLKE (264 aa)) are stalk. Residues 554–557 (KKKK) are critical for lipid-binding. The GED domain occupies 572–660 (MAEILEHLNA…ARRRLAKFPG (89 aa)).

Belongs to the TRAFAC class dynamin-like GTPase superfamily. Dynamin/Fzo/YdjA family. Homooligomer. Oligomerizes into multimeric filamentous or ring-like structures by virtue of its stalk domain. Oligomerization is critical for GTPase activity, protein stability, and recognition of viral target structures. Interacts with TRPC1, TRPC3, TRPC4, TRPC5, TRPC6 and TRPC7. Interacts with HSPA5. Interacts with TUBB/TUBB5. Interacts with DDX39A and DDX39B. ISGylated.

The protein resides in the cytoplasm. It is found in the endoplasmic reticulum membrane. The protein localises to the perinuclear region. Its function is as follows. Interferon-induced dynamin-like GTPase with antiviral activity. In Equus caballus (Horse), this protein is Interferon-induced GTP-binding protein Mx1 (MX1).